We begin with the raw amino-acid sequence, 256 residues long: Astacin-like metalloprotease toxin 2 (256 aa).

Positions 1–24 (MIPDVGFLVLLTGALFICIKAAPA) are cleaved as a signal peptide. Residues 25–52 (TTDVDPTFEGRIVMEGDILIREEQLTER) constitute a propeptide that is removed on maturation. One can recognise a Peptidase M12A domain in the interval 53–250 (NAIALENMRW…KKINTLYNCP (198 aa)). Intrachain disulfides connect cysteine 94/cysteine 249 and cysteine 117/cysteine 136. Histidine 144 lines the Zn(2+) pocket. Glutamate 145 is a catalytic residue. Residues histidine 148 and histidine 154 each contribute to the Zn(2+) site.

In terms of assembly, monomer. Zn(2+) serves as cofactor. In terms of tissue distribution, expressed by the venom gland.

It is found in the secreted. Inhibited by 1,10-phenanthroline. Functionally, zinc metalloprotease. Provoques deadhesion of endothelial cells from cell cultures, and also degradation of fibronectin, fibrinogen and gelatin in vitro. Its role in the venom is not fully understood but it might act as a spreading factor that facilitates diffusion of other venom toxins. Alternatively, it might be involved in the proteolytic processing of other venom toxins or it might play a role in extra-oral digestion of prey. This Loxosceles intermedia (Brown spider) protein is Astacin-like metalloprotease toxin 2.